The primary structure comprises 70 residues: Dermaseptin-H3 (70 aa).

The signal sequence occupies residues methionine 1–cysteine 22. Residues glutamate 23–methionine 43 constitute a propeptide that is removed on maturation. The interval glutamate 25–lysine 44 is disordered. Residues glutamate 30–glutamine 40 show a composition bias toward acidic residues. Leucine 70 carries the post-translational modification Leucine amide.

In terms of tissue distribution, expressed by the skin glands.

It is found in the secreted. Its function is as follows. Has antibacterial activity against the Gram-negative bacteria E.coli and P.aeruginosa, and the Gram-positive bacteria S.aureus and M.luteus. Has antiprotozoal activity against L.amazonensis. No hemolytic activity. The polypeptide is Dermaseptin-H3 (Pithecopus hypochondrialis (Orange-legged leaf frog)).